Here is a 285-residue protein sequence, read N- to C-terminus: Zinc transporter ZupT (285 aa).

3 consecutive transmembrane segments (helical) span residues A13–F33, F41–M61, and W80–V100. Positions 153 and 156 each coordinate Fe(2+). E156 contacts Zn(2+). Residues T160–I180 form a helical membrane-spanning segment. H181 serves as a coordination point for Zn(2+). N182, E185, and E214 together coordinate Fe(2+). Position 185 (E185) interacts with Zn(2+). 3 helical membrane passes run F204–L224, I228–I248, and L265–I285.

It belongs to the ZIP transporter (TC 2.A.5) family. ZupT subfamily.

It localises to the cell membrane. The enzyme catalyses Zn(2+)(in) = Zn(2+)(out). Mediates zinc uptake. May also transport other divalent cations. This chain is Zinc transporter ZupT, found in Clostridium perfringens (strain 13 / Type A).